We begin with the raw amino-acid sequence, 208 residues long: Large ribosomal subunit protein eL13 (208 aa).

Ser-177 and Ser-180 each carry phosphoserine.

The protein belongs to the eukaryotic ribosomal protein eL13 family. As to quaternary structure, component of the large ribosomal subunit (LSU). Mature yeast ribosomes consist of a small (40S) and a large (60S) subunit. The 40S small subunit contains 1 molecule of ribosomal RNA (18S rRNA) and at least 33 different proteins. The large 60S subunit contains 3 rRNA molecules (25S, 5.8S and 5S rRNA) and at least 46 different proteins.

The protein resides in the cytoplasm. In terms of biological role, component of the ribosome, a large ribonucleoprotein complex responsible for the synthesis of proteins in the cell. The small ribosomal subunit (SSU) binds messenger RNAs (mRNAs) and translates the encoded message by selecting cognate aminoacyl-transfer RNA (tRNA) molecules. The large subunit (LSU) contains the ribosomal catalytic site termed the peptidyl transferase center (PTC), which catalyzes the formation of peptide bonds, thereby polymerizing the amino acids delivered by tRNAs into a polypeptide chain. The nascent polypeptides leave the ribosome through a tunnel in the LSU and interact with protein factors that function in enzymatic processing, targeting, and the membrane insertion of nascent chains at the exit of the ribosomal tunnel. This is Large ribosomal subunit protein eL13 (rpl13) from Schizosaccharomyces pombe (strain 972 / ATCC 24843) (Fission yeast).